Here is a 95-residue protein sequence, read N- to C-terminus: DNA-directed RNA polymerase subunit Rpo11 (95 aa).

It belongs to the archaeal Rpo11/eukaryotic RPB11/RPC19 RNA polymerase subunit family. As to quaternary structure, part of the RNA polymerase complex.

The protein resides in the cytoplasm. The enzyme catalyses RNA(n) + a ribonucleoside 5'-triphosphate = RNA(n+1) + diphosphate. Functionally, DNA-dependent RNA polymerase (RNAP) catalyzes the transcription of DNA into RNA using the four ribonucleoside triphosphates as substrates. The protein is DNA-directed RNA polymerase subunit Rpo11 of Pyrococcus furiosus (strain ATCC 43587 / DSM 3638 / JCM 8422 / Vc1).